A 235-amino-acid polypeptide reads, in one-letter code: MSDLVFYDVASTGANGFDPDAGYMDFCVKNAELLNLAAVRIFFLNAAKAKAALSRKPERKANPKFGEWQVEVINNHFPGNRNNPIGNNDLTIHRLSGYLARWVLDQYNENDDESQHELIRTTIINPIAESNGVGWDSGPEIYLSFFPGTEMFLETFKFYPLTIGIHRVKQGMMDPQYLKKALRQRYGTLTADKWMSQKVAAIAKSLKDVEQLKWGKGGLSDTAKTFLQKFGIRLP.

RNA-binding residues include D18, A47, K50, N75, H76, R81, R94, I124, P126, E129, R167, Y177, R183, Q184, and R185.

The protein belongs to the orthobunyavirus nucleocapsid protein family. In terms of assembly, homotetramer. Binds the viral genomic RNA. Interacts with host PABP1.

The protein resides in the virion. Its function is as follows. Encapsidates the genome protecting it from nucleases. The encapsidated genomic RNA is termed the nucleocapsid (NC) and serves as template for transcription and replication. The NC have a helical organization. Seems to participate in the nuclear relocalization of host PABP1, thereby inhibiting host cellular translation. In Cervidae (Deer), this protein is Nucleoprotein (N).